We begin with the raw amino-acid sequence, 200 residues long: Phospholipase A2 inhibitor gamma subunit B (200 aa).

Positions 1–19 (MKFLLFCCLFGTFLATGMC) are cleaved as a signal peptide. 8 cysteine pairs are disulfide-bonded: C22–C46, C25–C32, C39–C67, C73–C94, C95–C100, C120–C145, C138–C165, and C171–C191. The N-linked (GlcNAc...) asparagine glycan is linked to N31.

The protein belongs to the CNF-like-inhibitor family. In terms of assembly, heterodimer of subunit A and subunit B. In terms of processing, N-glycosylated. Expressed by the liver. Not expressed in esophagus, stomach, pancreas, spleen, gall bladder, small intestine, rectum, kidney, trachea, lung, testis and body fat.

The protein resides in the secreted. Functionally, inhibits the enzymatic activity of phospholipase A2 (PA2). This Elaphe quadrivirgata (Japanese four-lined ratsnake) protein is Phospholipase A2 inhibitor gamma subunit B.